A 323-amino-acid chain; its full sequence is ATP synthase gamma chain (323 aa).

The protein belongs to the ATPase gamma chain family. In terms of assembly, F-type ATPases have 2 components, CF(1) - the catalytic core - and CF(0) - the membrane proton channel. CF(1) has five subunits: alpha(3), beta(3), gamma(1), delta(1), epsilon(1). CF(0) has three main subunits: a, b and c.

It localises to the cell inner membrane. Its function is as follows. Produces ATP from ADP in the presence of a proton gradient across the membrane. The gamma chain is believed to be important in regulating ATPase activity and the flow of protons through the CF(0) complex. The chain is ATP synthase gamma chain from Rickettsia rickettsii (strain Iowa).